The following is a 311-amino-acid chain: Formimidoylglutamase (311 aa).

Residues His-130, Asp-155, His-157, Asp-159, Cys-242, and Asp-244 each contribute to the Mn(2+) site.

The protein belongs to the arginase family. Mn(2+) serves as cofactor.

It carries out the reaction N-formimidoyl-L-glutamate + H2O = formamide + L-glutamate. It functions in the pathway amino-acid degradation; L-histidine degradation into L-glutamate; L-glutamate from N-formimidoyl-L-glutamate (hydrolase route): step 1/1. Its function is as follows. Catalyzes the conversion of N-formimidoyl-L-glutamate to L-glutamate and formamide. The chain is Formimidoylglutamase from Staphylococcus aureus (strain bovine RF122 / ET3-1).